A 230-amino-acid polypeptide reads, in one-letter code: Glutathione S-transferase 2 (230 aa).

Positions 2-86 (AHFTLYSHAG…YLADKYDTDR (85 aa)) constitute a GST N-terminal domain. A GST C-terminal domain is found at 93 to 230 (DDPEYYKLIQ…EELAKAKEQH (138 aa)).

This sequence belongs to the GST superfamily.

The enzyme catalyses RX + glutathione = an S-substituted glutathione + a halide anion + H(+). In terms of biological role, involved in the oxidative stress response and detoxification. The sequence is that of Glutathione S-transferase 2 (gst2) from Schizosaccharomyces pombe (strain 972 / ATCC 24843) (Fission yeast).